Here is a 175-residue protein sequence, read N- to C-terminus: Ferritin light chain (175 aa).

Serine 2 carries the N-acetylserine modification. The 150-residue stretch at glutamine 7 to serine 156 folds into the Ferritin-like diiron domain. Residues glutamate 54, glutamate 57, glutamate 58, glutamate 61, and glutamate 64 each contribute to the Fe cation site.

The protein belongs to the ferritin family. Oligomer of 24 subunits. There are two types of subunits: L (light) chain and H (heavy) chain. The major chain can be light or heavy, depending on the species and tissue type. The functional molecule forms a roughly spherical shell with a diameter of 12 nm and contains a central cavity into which the insoluble mineral iron core is deposited. Interacts with NCOA4.

It is found in the cytoplasmic vesicle. Its subcellular location is the autophagosome. The protein localises to the cytoplasm. The protein resides in the autolysosome. In terms of biological role, stores iron in a soluble, non-toxic, readily available form. Important for iron homeostasis. Iron is taken up in the ferrous form and deposited as ferric hydroxides after oxidation. Also plays a role in delivery of iron to cells. Mediates iron uptake in capsule cells of the developing kidney. Delivery to lysosomes by the cargo receptor NCOA4 for autophagic degradation and release or iron. This chain is Ferritin light chain (FTL), found in Felis catus (Cat).